A 334-amino-acid chain; its full sequence is F-box protein AUF1 (334 aa).

The 49-residue stretch at 1 to 49 (MDAFDAIPDPVVIDILNRVGDVKTLIRCRSVSKRFNSLATQSESLLLQL) folds into the F-box domain.

In terms of assembly, part of a SCF (ASK-cullin-F-box) protein ligase complex. Interacts with SKP1A/ASK1, SKP1B/ASK2, ASK11 and ASK13.

The protein localises to the nucleus. Its pathway is protein modification; protein ubiquitination. Functionally, component of SCF(ASK-cullin-F-box) E3 ubiquitin ligase complexes, which may mediate the ubiquitination and subsequent proteasomal degradation of target proteins. Involved in the control of basipetal and acropetal auxin transport by promoting the distribution and expression of the auxin transporter PIN2. Promotes cytokinin-mediated cell expansion in the root elongation and differentiation zone, without affecting root cell division. The chain is F-box protein AUF1 from Arabidopsis thaliana (Mouse-ear cress).